The sequence spans 260 residues: Trans-aconitate 2-methyltransferase (260 aa).

It belongs to the methyltransferase superfamily. Tam family.

The protein localises to the cytoplasm. The catalysed reaction is trans-aconitate + S-adenosyl-L-methionine = (E)-3-(methoxycarbonyl)pent-2-enedioate + S-adenosyl-L-homocysteine. Catalyzes the S-adenosylmethionine monomethyl esterification of trans-aconitate. The polypeptide is Trans-aconitate 2-methyltransferase (Paracidovorax citrulli (strain AAC00-1) (Acidovorax citrulli)).